Here is a 207-residue protein sequence, read N- to C-terminus: ConoCAP (207 aa).

Positions 1–21 are cleaved as a signal peptide; that stretch reads MVSLGHVLFVILLPVLLPVAA. Positions 22–48 are excised as a propeptide; that stretch reads DDPDDQMLSQISLPSSSRSEYDDNDVS. Cys53 and Cys59 are oxidised to a cystine. Position 60 is a glycine amide (Gly60). The propeptide occupies 63–82; that stretch reads HRDRSRRQERYGKRLIPVLA. Cysteines 87 and 92 form a disulfide. Asn94 carries the post-translational modification Asparagine amide. The propeptide occupies 98-160; sequence SLSGAGPALS…RDPAASGDLS (63 aa). The tract at residues 131-155 is disordered; it reads ARHEQQQQLLQQREQRGLESRDPAA. The span at 143–152 shows a compositional bias: basic and acidic residues; that stretch reads REQRGLESRD. Residues Cys165 and Cys171 are joined by a disulfide bond. Residue Gly173 is modified to Glycine amide. The propeptide occupies 177 to 207; sequence TLYSPWLERMNEVADDRSARNALCTRLGWRE.

Expressed by the venom duct.

The protein resides in the secreted. Functionally, in contrast to other members of the CCAP family which are cardio-accelerators, conoCAP-a decreases the heart frequency in Drosophila larvae (26%), rats and zebrafish embryos. It also reduces the blood pressure in rats. It decreases systolic calcium in ventricular cardiac myocytes, indicating that it may act via impairment of intracellular calcium trafficking. Its function is as follows. Synthetic conoCAP-b decreases the heart frequency of 23% in Drosophila larvae. In terms of biological role, synthetic conoCAP-c decreases the heart frequency of 12% in Drosophila larvae. This Conus villepinii (Villepin's cone) protein is ConoCAP (conoCAP).